Reading from the N-terminus, the 262-residue chain is Phosphonates import ATP-binding protein PhnC (262 aa).

The ABC transporter domain maps to 5-253; it reads IRVEKLAKTF…RFDHLYRSIN (249 aa). 37–44 contributes to the ATP binding site; the sequence is GPSGSGKS.

Belongs to the ABC transporter superfamily. Phosphonates importer (TC 3.A.1.9.1) family. The complex is composed of two ATP-binding proteins (PhnC), two transmembrane proteins (PhnE) and a solute-binding protein (PhnD).

The protein localises to the cell inner membrane. It catalyses the reaction phosphonate(out) + ATP + H2O = phosphonate(in) + ADP + phosphate + H(+). Functionally, part of the ABC transporter complex PhnCDE involved in phosphonates import. Responsible for energy coupling to the transport system. This is Phosphonates import ATP-binding protein PhnC from Shigella flexneri serotype 5b (strain 8401).